Consider the following 255-residue polypeptide: Tabinhibitin 1 (255 aa).

The signal sequence occupies residues 1–23 (MTSILVSRFLIAALVLQYATSDA). Residues 67 to 211 (LSKINDVRDH…KARALLTCNF (145 aa)) form the SCP domain.

The protein belongs to the CRISP family. Expressed in salivary glands.

It is found in the secreted. Inhibits platelet aggregation induced by all agonists tested. May act by competing with fibrinogen for binding to glycoprotein IIb/IIIa (ITGA2B/ITGB3). This Tabanus yao (Horsefly) protein is Tabinhibitin 1.